The following is a 123-amino-acid chain: Con-ikot-ikot (123 aa).

Positions 1–18 (MAMNMSMTLCMFVMVVVA) are cleaved as a signal peptide. A propeptide spanning residues 19-37 (ATVIDSTQLQEPDLSRMRR) is cleaved from the precursor. Cystine bridges form between Cys-49/Cys-80, Cys-50/Cys-89, Cys-57/Cys-72, Cys-90/Cys-118, and Cys-96/Cys-113.

In terms of assembly, homodimer; disulfide-linked. Expressed by the venom duct.

It localises to the secreted. In terms of biological role, potently and selectively blocks the desensitization of ionotropic glutamate AMPA receptors (GRIA1, GRIA2, GRIA3 and GRIA4). Binds to a different site than does the drug cyclothiazide. The toxin acts like a straitjacket on the 'gating ring' of the ligand-binding domain (LBD) of the receptor. It does so by restraining the domains via both intra- and interdimer cross-links such that agonist-induced closure of the LBD 'clamshells' is transduced into an irislike expansion of the gating ring. Compared to other desensitization blockers, it is a poor stabilizer of the open channel because toxin-bound AMPA receptors undergo frequent brief closures. In vitro, application of the toxin to hippocampal slices causes a large and rapid increase in resting AMPA receptor-mediated current leading to neuronal death. In Conus striatus (Striated cone), this protein is Con-ikot-ikot.